A 333-amino-acid chain; its full sequence is uncharacterized protein (333 aa).

The region spanning 45 to 318 (NVIVSDSMFI…EYVKIIHPKI (274 aa)) is the Fe/B12 periplasmic-binding domain.

This is an uncharacterized protein from Methanocaldococcus jannaschii (strain ATCC 43067 / DSM 2661 / JAL-1 / JCM 10045 / NBRC 100440) (Methanococcus jannaschii).